Reading from the N-terminus, the 204-residue chain is uncharacterized protein (204 aa).

Residues 160-180 (GLTVAAIASVVVAGAVTYLVV) traverse the membrane as a helical segment.

To M.pneumoniae MPN_373 C-terminal region.

Its subcellular location is the cell membrane. This is an uncharacterized protein from Mycoplasma pneumoniae (strain ATCC 29342 / M129 / Subtype 1) (Mycoplasmoides pneumoniae).